Consider the following 1874-residue polypeptide: Protein TIC 214 (1874 aa).

Transmembrane regions (helical) follow at residues 18 to 38, 64 to 84, 87 to 107, 124 to 144, 172 to 192, and 221 to 241; these read IINS…FSIG, FITG…HLAL, PHTI…WNNH, LSIQ…YFIL, VGWL…LVWI, and IFSI…PSPI. Disordered regions lie at residues 248 to 310 and 1567 to 1624; these read ETSK…EIRV and KTEC…NEED. Residues 255–268 are compositionally biased toward acidic residues; that stretch reads GVESEEEGDVEIET. Composition is skewed to basic and acidic residues over residues 298–310 and 1584–1601; these read DSNK…EIRV and NQKE…RSDA.

This sequence belongs to the TIC214 family. As to quaternary structure, part of the Tic complex.

The protein localises to the plastid. It is found in the chloroplast inner membrane. Its function is as follows. Involved in protein precursor import into chloroplasts. May be part of an intermediate translocation complex acting as a protein-conducting channel at the inner envelope. The protein is Protein TIC 214 of Coffea arabica (Arabian coffee).